The sequence spans 102 residues: Inner membrane protein YaiY (102 aa).

Residues 1-24 (MADFTLSKSLFSGKYRNASSTPGN) lie on the Cytoplasmic side of the membrane. Residues 25-45 (IAYALFVLFCFWAGAQLLNLL) form a helical membrane-spanning segment. Residues 46–74 (VHAPGVYERLMQVQETGRPRVEIGLGVGT) lie on the Periplasmic side of the membrane. The helical transmembrane segment at 75-95 (IFGLIPFLVGCLIFAVVALWL) threads the bilayer. Over 96-102 (HWRHRRQ) the chain is Cytoplasmic.

It is found in the cell inner membrane. The sequence is that of Inner membrane protein YaiY (yaiY) from Escherichia coli O157:H7.